The primary structure comprises 659 residues: MANSPAAPAPTTTTGGDSRRRLSASIEAICKRRFRRNSKGGGRSDMVKPFNIINFSTQDKNSSCCCFTKFQIVKLLLFILLSATLFTIIYSPEAYHHSLSHSSSRWIWRRQDPRYFSDLDINWDDVTKTLENIEEGRTIGVLNFDSNEIQRWREVSKSKDNGDEEKVVVLNLDYADKNVTWDALYPEWIDEEQETEVPVCPNIPNIKVPTRRLDLIVVKLPCRKEGNWSRDVGRLHLQLAAATVAASAKGFFRGHVFFVSRCFPIPNLFRCKDLVSRRGDVWLYKPNLDTLRDKLQLPVGSCELSLPLGIQDRPSLGNPKREAYATILHSAHVYVCGAIAAAQSIRQSGSTRDLVILVDDNISGYHRSGLEAAGWQIRTIQRIRNPKAEKDAYNEWNYSKFRLWQLTDYDKIIFIDADLLILRNIDFLFSMPEISATGNNGTLFNSGVMVIEPCNCTFQLLMEHINEIESYNGGDQGYLNEVFTWWHRIPKHMNFLKHFWIGDEDDAKRKKTELFGAEPPVLYVLHYLGMKPWLCYRDYDCNFNSDIFVEFATDIAHRKWWMVHDAMPQELHQFCYLRSKQKAQLEYDRRQAEAANYADGHWKIRVKDPRFKICIDKLCNWKSMLRHWGESNWTDYESFVPTPPAITVDRRSSLPGHNL.

Residues 1 to 14 are compositionally biased toward low complexity; it reads MANSPAAPAPTTTT. The tract at residues 1–20 is disordered; that stretch reads MANSPAAPAPTTTTGGDSRR. A helical; Signal-anchor for type II membrane protein membrane pass occupies residues 70-90; it reads FQIVKLLLFILLSATLFTIIY. 2 residues coordinate Mn(2+): D416 and D418. Residues 416–418, 445–447, 472–476, and 526–531 each bind substrate; these read DAD, NSG, NGGDQ, and HYLGMK. Position 526 (H526) interacts with Mn(2+).

It belongs to the glycosyltransferase 8 family. Glycogenin subfamily. Mn(2+) is required as a cofactor.

The protein localises to the golgi apparatus membrane. Its function is as follows. Glycosyltransferase required for the addition of both glucuronic acid and 4-O-methylglucuronic acid branches to xylan in stem cell walls. In association with GUX2, is responsible for almost all of the substitutions of the xylan backbone in stem glucuronoxylan. This chain is UDP-glucuronate:xylan alpha-glucuronosyltransferase 1 (GUX1), found in Arabidopsis thaliana (Mouse-ear cress).